We begin with the raw amino-acid sequence, 459 residues long: Putrescine aminotransferase (459 aa).

Pyridoxal 5'-phosphate-binding positions include 150-151 (GT) and glutamine 274. The residue at position 300 (lysine 300) is an N6-(pyridoxal phosphate)lysine. Threonine 332 lines the pyridoxal 5'-phosphate pocket.

Belongs to the class-III pyridoxal-phosphate-dependent aminotransferase family. Putrescine aminotransferase subfamily. Requires pyridoxal 5'-phosphate as cofactor.

The catalysed reaction is an alkane-alpha,omega-diamine + 2-oxoglutarate = an omega-aminoaldehyde + L-glutamate. It catalyses the reaction putrescine + 2-oxoglutarate = 1-pyrroline + L-glutamate + H2O. It carries out the reaction cadaverine + 2-oxoglutarate = 5-aminopentanal + L-glutamate. It participates in amine and polyamine degradation; putrescine degradation; 4-aminobutanal from putrescine (transaminase route): step 1/1. Catalyzes the aminotransferase reaction from putrescine to 2-oxoglutarate, leading to glutamate and 4-aminobutanal, which spontaneously cyclizes to form 1-pyrroline. This is the first step in one of two pathways for putrescine degradation, where putrescine is converted into 4-aminobutanoate (gamma-aminobutyrate or GABA) via 4-aminobutanal. Also functions as a cadaverine transaminase in a a L-lysine degradation pathway to succinate that proceeds via cadaverine, glutarate and L-2-hydroxyglutarate. This chain is Putrescine aminotransferase, found in Escherichia fergusonii (strain ATCC 35469 / DSM 13698 / CCUG 18766 / IAM 14443 / JCM 21226 / LMG 7866 / NBRC 102419 / NCTC 12128 / CDC 0568-73).